The chain runs to 225 residues: 3-dehydroquinate dehydratase (225 aa).

3-dehydroquinate-binding positions include 30–32 (EWR) and Arg-62. The active-site Proton donor/acceptor is His-118. Lys-143 functions as the Schiff-base intermediate with substrate in the catalytic mechanism. The 3-dehydroquinate site is built by Arg-186, Ser-205, and Gln-209.

Belongs to the type-I 3-dehydroquinase family. Homodimer.

The enzyme catalyses 3-dehydroquinate = 3-dehydroshikimate + H2O. It participates in metabolic intermediate biosynthesis; chorismate biosynthesis; chorismate from D-erythrose 4-phosphate and phosphoenolpyruvate: step 3/7. Its function is as follows. Involved in the third step of the chorismate pathway, which leads to the biosynthesis of aromatic amino acids. Catalyzes the cis-dehydration of 3-dehydroquinate (DHQ) and introduces the first double bond of the aromatic ring to yield 3-dehydroshikimate. The polypeptide is 3-dehydroquinate dehydratase (Streptococcus mutans serotype c (strain ATCC 700610 / UA159)).